The sequence spans 62 residues: Large ribosomal subunit protein eL24 (62 aa).

Zn(2+) is bound by residues Cys-6, Cys-9, Cys-32, and Cys-36. A C4-type zinc finger spans residues 6–36; it reads CSFCEGKIEPGCGKKYVKKDGSVMQFCSSKC.

This sequence belongs to the eukaryotic ribosomal protein eL24 family. Part of the 50S ribosomal subunit. Forms a cluster with proteins L3 and L14. Zn(2+) is required as a cofactor.

Its function is as follows. Binds to the 23S rRNA. This is Large ribosomal subunit protein eL24 from Methanococcus vannielii (strain ATCC 35089 / DSM 1224 / JCM 13029 / OCM 148 / SB).